The chain runs to 479 residues: Integrator complex subunit 12 (479 aa).

The interval 57-140 is disordered; it reads SKVSLPKMTK…SPIAFQTKDI (84 aa). Positions 70 to 90 are enriched in low complexity; sequence KSSSSSSASSSITTTSSSKSS. Residues 91 to 128 show a composition bias toward basic and acidic residues; sequence TSEKSKKESEKRTLEKIRVDPGEGVEPPKKPRLEKQDS. A PHD-type zinc finger spans residues 161–217; the sequence is GLACVVCRQMTVTSGNQLVECQECHNLYHQECHKPQVTDKDVNDPRLVWYCARCTRQ. Disordered regions lie at residues 221 to 241, 274 to 293, and 305 to 479; these read MAQKTQKPPQKPAPALATTVP, TAASGNSSSSSSSSSSLPPG, and SNVG…KLKK. Low complexity-rich tracts occupy residues 223-239 and 280-289; these read QKTQKPPQKPAPALATT and SSSSSSSSSS. Polar residues predominate over residues 305 to 328; that stretch reads SNVGPSSTKLSTSQSGNSKTSPAA. Positions 354–364 are enriched in gly residues; sequence SSAGSGNGNNG. Residues 399-411 show a composition bias toward low complexity; that stretch reads GSLSPGAAPSSSL. Residues 412–428 show a composition bias toward gly residues; that stretch reads GGNGGSGGNGAGNGGNS. Positions 429-451 are enriched in low complexity; that stretch reads AGSSSSSGNNNNNGAKASADGKA. A compositionally biased stretch (basic residues) spans 466–479; it reads QMVKKKAAQKKLKK.

It belongs to the Integrator subunit 12 family. In terms of assembly, component of the Integrator complex, composed of core subunits INTS1, INTS2, INTS3, INTS4, INTS5, INTS6, INTS7, INTS8, INTS9/RC74, INTS10, INTS11/CPSF3L, INTS12, INTS13, INTS14 and INTS15. The core complex associates with protein phosphatase 2A subunits PPP2CA and PPP2R1A, to form the Integrator-PP2A (INTAC) complex.

It is found in the nucleus. Its function is as follows. Component of the integrator complex, a multiprotein complex that terminates RNA polymerase II (Pol II) transcription in the promoter-proximal region of genes. The integrator complex provides a quality checkpoint during transcription elongation by driving premature transcription termination of transcripts that are unfavorably configured for transcriptional elongation: the complex terminates transcription by (1) catalyzing dephosphorylation of the C-terminal domain (CTD) of Pol II subunit POLR2A/RPB1 and SUPT5H/SPT5, (2) degrading the exiting nascent RNA transcript via endonuclease activity and (3) promoting the release of Pol II from bound DNA. The integrator complex is also involved in terminating the synthesis of non-coding Pol II transcripts, such as enhancer RNAs (eRNAs), small nuclear RNAs (snRNAs), telomerase RNAs and long non-coding RNAs (lncRNAs). The polypeptide is Integrator complex subunit 12 (ints12) (Danio rerio (Zebrafish)).